A 75-amino-acid chain; its full sequence is Rugosin-LK1 (75 aa).

An N-terminal signal peptide occupies residues 1–22 (MFTMKKSLLFLFFLGTISLSFC). Residues 23–40 (EEERSADEDDEGEMTEEE) constitute a propeptide that is removed on maturation.

In terms of tissue distribution, expressed by the skin glands.

The protein resides in the secreted. In terms of biological role, has antimicrobial activity against Gram-positive bacteria S.aureus ATCC 2592 (MIC=10.0 uM), S.aureus ATCC 43300 (MIC=15.0 uM) and B.subtilis (MIC=40.0 uM), against Gram-negative bacteria E.coli ML-35P (MIC=10.0 uM), P.aeruginosa PA01 (MIC=5.0 uM) and P.aeruginosa ATCC 27853 (MIC=5.0 uM) and against fungus C.albicans ATCC 2002 (MIC=10.0 uM). This is Rugosin-LK1 from Limnonectes kuhlii (Kuhl's Creek frog).